The chain runs to 255 residues: Homeobox protein DLX-1 (255 aa).

Positions 1–14 are enriched in polar residues; sequence MTMTTMPESLNSPV. 2 disordered regions span residues 1–38 and 95–118; these read MTMT…MSHG and SLAQ…EGGE. Low complexity predominate over residues 25–36; it reads PPNQQMSPSPMS. Residues 100–112 show a composition bias toward basic and acidic residues; it reads RLEDPGADSEKST. Residues 128-187 constitute a DNA-binding region (homeobox); the sequence is IRKPRTIYSSLQLQALNRRFQQTQYLALPERAELAASLGLTQTQVKIWFQNKRSKFKKLM. The disordered stretch occupies residues 204–230; sequence ALSAGSPPVPPGWNPNSSSGKGSGGNA.

It belongs to the distal-less homeobox family. As to quaternary structure, interacts with SMAD4 (via homeobox DNA-binding domain). Interacts (via homeobox DNA-binding domain) with POU4F2; this interaction suppresses DLX1-mediated transcriptional activity in postnatal retina and enhances retinal ganglion cell (RGC) differentiation. In terms of tissue distribution, expressed in hematopoietic cell lines.

Its subcellular location is the nucleus. Functionally, plays a role as a transcriptional activator or repressor. Inhibits several cytokine signaling pathways, such as TGFB1, activin-A/INHBA and BMP4 by interfering with the transcriptional stimulatory activity of transcription factors, such as MSX2, FAST2, SMAD2 and SMAD3 during hematopoietic cell differentiation. Plays a role in terminal differentiation of interneurons, such as amacrine and bipolar cells in the developing retina. Likely to play a regulatory role in the development of the ventral forebrain. May play a role in craniofacial patterning and morphogenesis and may be involved in the early development of diencephalic subdivisions. The sequence is that of Homeobox protein DLX-1 (DLX1) from Homo sapiens (Human).